Here is a 104-residue protein sequence, read N- to C-terminus: uncharacterized protein (104 aa).

The segment at 62–92 is disordered; the sequence is SSPAASSHPRKRGKEKKERTPTERLAAPARK.

This is an uncharacterized protein from Human adenovirus B serotype 7 (HAdV-7).